Reading from the N-terminus, the 256-residue chain is Triosephosphate isomerase (256 aa).

Asparagine 12–lysine 14 provides a ligand contact to substrate. The active-site Electrophile is histidine 99. Catalysis depends on glutamate 169, which acts as the Proton acceptor. Substrate-binding positions include glycine 175, serine 214, and glycine 235 to glycine 236.

Belongs to the triosephosphate isomerase family. As to quaternary structure, homodimer.

Its subcellular location is the cytoplasm. It catalyses the reaction D-glyceraldehyde 3-phosphate = dihydroxyacetone phosphate. It participates in carbohydrate biosynthesis; gluconeogenesis. It functions in the pathway carbohydrate degradation; glycolysis; D-glyceraldehyde 3-phosphate from glycerone phosphate: step 1/1. Involved in the gluconeogenesis. Catalyzes stereospecifically the conversion of dihydroxyacetone phosphate (DHAP) to D-glyceraldehyde-3-phosphate (G3P). In Mesorhizobium japonicum (strain LMG 29417 / CECT 9101 / MAFF 303099) (Mesorhizobium loti (strain MAFF 303099)), this protein is Triosephosphate isomerase.